We begin with the raw amino-acid sequence, 409 residues long: Putative competence-damage inducible protein (409 aa).

Belongs to the CinA family.

The sequence is that of Putative competence-damage inducible protein from Clostridium tetani (strain Massachusetts / E88).